The following is an 89-amino-acid chain: Small ribosomal subunit protein uS14 (89 aa).

Belongs to the universal ribosomal protein uS14 family. In terms of assembly, part of the 30S ribosomal subunit. Contacts proteins S3 and S10.

Functionally, binds 16S rRNA, required for the assembly of 30S particles and may also be responsible for determining the conformation of the 16S rRNA at the A site. The protein is Small ribosomal subunit protein uS14 of Onion yellows phytoplasma (strain OY-M).